The sequence spans 317 residues: Acetyl-coenzyme A carboxylase carboxyl transferase subunit alpha (317 aa).

Residues 32 to 293 (NLSEEIARLE…KRLLTSELQA (262 aa)) enclose the CoA carboxyltransferase C-terminal domain.

This sequence belongs to the AccA family. Acetyl-CoA carboxylase is a heterohexamer composed of biotin carboxyl carrier protein (AccB), biotin carboxylase (AccC) and two subunits each of ACCase subunit alpha (AccA) and ACCase subunit beta (AccD).

The protein resides in the cytoplasm. The enzyme catalyses N(6)-carboxybiotinyl-L-lysyl-[protein] + acetyl-CoA = N(6)-biotinyl-L-lysyl-[protein] + malonyl-CoA. It participates in lipid metabolism; malonyl-CoA biosynthesis; malonyl-CoA from acetyl-CoA: step 1/1. Functionally, component of the acetyl coenzyme A carboxylase (ACC) complex. First, biotin carboxylase catalyzes the carboxylation of biotin on its carrier protein (BCCP) and then the CO(2) group is transferred by the carboxyltransferase to acetyl-CoA to form malonyl-CoA. The sequence is that of Acetyl-coenzyme A carboxylase carboxyl transferase subunit alpha from Legionella pneumophila (strain Paris).